We begin with the raw amino-acid sequence, 347 residues long: Bombesin receptor-activated protein C6orf89 (347 aa).

Topologically, residues 1-58 (MDLAANEISIYDKLSETVDLVRQTGHQCGMSEKAIEKFIRQLLEKNEPQRPPPQYPLL) are cytoplasmic. Residues 59–79 (IVVYKVLATLGLILLTAYFVI) traverse the membrane as a helical segment. Over 80–347 (QPFSPLAPEP…ICDGTAFSEL (268 aa)) the chain is Extracellular.

As to quaternary structure, homodimer. Interacts with BRS3. Interacts (via N-terminus) with SIN3B. Post-translationally, glycosylated.

It localises to the golgi apparatus membrane. The protein resides in the midbody. Its subcellular location is the cytoplasm. The protein localises to the nucleus. It is found in the nucleolus. In terms of biological role, exhibits histone deacetylase (HDAC) enhancer properties. May play a role in cell cycle progression and wound repair of bronchial epithelial cells. The polypeptide is Bombesin receptor-activated protein C6orf89 (C6orf89) (Homo sapiens (Human)).